A 322-amino-acid chain; its full sequence is Solute carrier family 25 member 16 (322 aa).

Solcar repeat units lie at residues 34-120 (FYWL…YKTF), 128-219 (SGHV…LKSV), and 241-322 (LKTH…AVAF).

This sequence belongs to the mitochondrial carrier (TC 2.A.29) family.

It is found in the mitochondrion inner membrane. In terms of biological role, may be involved in the transport of coenzyme A in the mitochondrial matrix. Very little is known about the physiological function of this carrier. The sequence is that of Solute carrier family 25 member 16 from Rattus norvegicus (Rat).